The chain runs to 108 residues: Ribulose bisphosphate carboxylase small subunit (108 aa).

This sequence belongs to the RuBisCO small chain family. As to quaternary structure, heterohexadecamer of 8 large and 8 small subunits.

In terms of biological role, ruBisCO catalyzes two reactions: the carboxylation of D-ribulose 1,5-bisphosphate, the primary event in carbon dioxide fixation, as well as the oxidative fragmentation of the pentose substrate. Both reactions occur simultaneously and in competition at the same active site. Although the small subunit is not catalytic it is essential for maximal activity. This chain is Ribulose bisphosphate carboxylase small subunit, found in Nitrobacter vulgaris.